The following is a 530-amino-acid chain: NADH-quinone oxidoreductase subunit C/D (530 aa).

The NADH dehydrogenase I subunit C stretch occupies residues 1 to 144 (MEEIKYIEPA…NPLRMDNEET (144 aa)). An NADH dehydrogenase I subunit D region spans residues 171–530 (EYVVNIGPQH…LDYVVPDIDR (360 aa)).

The protein in the N-terminal section; belongs to the complex I 30 kDa subunit family. In the C-terminal section; belongs to the complex I 49 kDa subunit family. NDH-1 is composed of 13 different subunits. Subunits NuoB, CD, E, F, and G constitute the peripheral sector of the complex.

The protein localises to the cell inner membrane. It carries out the reaction a quinone + NADH + 5 H(+)(in) = a quinol + NAD(+) + 4 H(+)(out). Functionally, NDH-1 shuttles electrons from NADH, via FMN and iron-sulfur (Fe-S) centers, to quinones in the respiratory chain. The immediate electron acceptor for the enzyme in this species is believed to be a menaquinone. Couples the redox reaction to proton translocation (for every two electrons transferred, four hydrogen ions are translocated across the cytoplasmic membrane), and thus conserves the redox energy in a proton gradient. This is NADH-quinone oxidoreductase subunit C/D from Bacteroides fragilis (strain ATCC 25285 / DSM 2151 / CCUG 4856 / JCM 11019 / LMG 10263 / NCTC 9343 / Onslow / VPI 2553 / EN-2).